The following is a 717-amino-acid chain: Cell division cycle protein 27 homolog A (717 aa).

Over residues 198–208 the composition is skewed to polar residues; that stretch reads TEHIPGENQQD. Disordered stretches follow at residues 198–217, 282–315, and 342–374; these read TEHI…QPGD, LSAE…KDSH, and SKEA…SPDR. Basic residues predominate over residues 293–304; that stretch reads RRSARIAARKKN. Over residues 342–356 the composition is skewed to polar residues; that stretch reads SKEATTSGQSVSDIG. TPR repeat units lie at residues 421–454, 489–522, 524–556, 557–590, 592–624, 625–658, and 659–692; these read HWVL…YPYA, PESW…NERF, YAHT…DTRH, YNAW…NPRS, VIMC…DAKN, PLPK…APQE, and SSVH…SPSP.

It belongs to the APC3/CDC27 family. As to quaternary structure, the APC/C is composed of at least 10 subunits. Interacts with APC2 and APC10.

The protein localises to the nucleus. The protein operates within protein modification; protein ubiquitination. In terms of biological role, component of the anaphase promoting complex/cyclosome (APC/C), a cell cycle-regulated E3 ubiquitin-protein ligase complex that controls progression through mitosis and the G1 phase of the cell cycle. The APC/C complex controls several key steps in the cell cycle by mediating ubiquitination and subsequent degradation of target proteins such as cyclins. The APC/C complex is required for the female gametophyte development and is involved in several aspect of development by controlling cell division and cell elongation. Involved in the control of endoreduplication. Functionally redundant with CDC27B in the control of gametophyte development. This is Cell division cycle protein 27 homolog A (CDC27A) from Arabidopsis thaliana (Mouse-ear cress).